The following is a 292-amino-acid chain: uncharacterized protein (292 aa).

2 disordered regions span residues 29–50 (SEKP…LRDS) and 166–292 (VKRK…EELK). Residue Ser-50 is modified to Phosphoserine. Polar residues-rich tracts occupy residues 176–189 (NSKN…PVNN) and 208–217 (GSPTNFSKLI). Residues 221 to 239 (YKDEWLQQQKADSDRRTPK) are compositionally biased toward basic and acidic residues. Polar residues-rich tracts occupy residues 240-250 (TSEASVSTQST) and 260-270 (DTETPQNSETP).

Post-translationally, phosphorylated upon DNA damage.

This is an uncharacterized protein from Rattus norvegicus (Rat).